Here is a 758-residue protein sequence, read N- to C-terminus: Microtubule-associated protein tau (758 aa).

Over residues 1 to 26 the composition is skewed to basic and acidic residues; the sequence is MAEPHQEFDVTEDHAGTYGLGDRKDQ. Residues 1–573 are disordered; it reads MAEPHQEFDV…PVPMPDLKNV (573 aa). An N-acetylalanine modification is found at alanine 2. Residues tyrosine 18 and tyrosine 29 each carry the phosphotyrosine modification. Lysine 44 is covalently cross-linked (Glycyl lysine isopeptide (Lys-Gly) (interchain with G-Cter in ubiquitin)). Serine 46 and serine 61 each carry phosphoserine. Residues 61–71 show a composition bias toward polar residues; the sequence is SETSDAKSTPT. Phosphothreonine occurs at positions 69, 71, and 111. Composition is skewed to basic and acidic residues over residues 179–189 and 207–216; these read EGGRHAPELLK and GGKERPGSKE. Serine 214 bears the Phosphoserine mark. Acidic residues predominate over residues 217-228; the sequence is EVDEDRDVDESS. The segment covering 314-323 has biased composition (basic and acidic residues); sequence EQAHSEEHLR. Residues 325-340 are compositionally biased toward low complexity; sequence AAFPGAPGEGPEAQGP. 2 stretches are compositionally biased toward basic and acidic residues: residues 344–356 and 381–393; these read EDAKEADLPEPSE and KSKDGTGSDDKKA. Residues 440–452 are compositionally biased toward polar residues; the sequence is KYVSSVTPRTGSS. A compositionally biased stretch (basic and acidic residues) spans 455 to 466; that stretch reads KEMKLKGADGKT. Phosphothreonine is present on threonine 470. The residue at position 472 (arginine 472) is an Omega-N-methylarginine. Lysine 480 is subject to N6,N6-dimethyllysine; alternate. Lysine 480 bears the N6-acetyllysine; alternate mark. Phosphothreonine is present on residues threonine 486, threonine 492, and threonine 498. The span at 491-503 shows a compositional bias: pro residues; that stretch reads KTPPAPKTPPSSG. Phosphoserine is present on residues serine 502, serine 508, and serine 512. Over residues 504-531 the composition is skewed to low complexity; that stretch reads EPPKSGDRSGYSSPGSPGTPGSRSRTPS. Tyrosine 514 is subject to Phosphotyrosine. Residues serine 515, serine 516, and serine 519 each carry the phosphoserine modification. Threonine 522 and threonine 529 each carry phosphothreonine. A Phosphoserine modification is found at serine 531. Position 534 is a phosphothreonine (threonine 534). The residue at position 542 (lysine 542) is an N6-acetyllysine. A Phosphothreonine modification is found at threonine 548. Phosphoserine is present on residues serine 552 and serine 554. Tau/MAP repeat units follow at residues 561–591, 592–622, 623–653, and 654–685; these read QTAPVPMPDLKNVKSKIGSTENLKHQPGGGK, VQIINKKLDLSNVQSKCGSKDNIKHVPGGGS, VQIVYKPVDLSKVTSKCGSLGNIHHKPGGGQ, and VEVKSEKLDFKDRVQSKIGSLDNITHVPGGGH. Lysine 571 participates in a covalent cross-link: Glycyl lysine isopeptide (Lys-Gly) (interchain with G-Cter in ubiquitin). Position 576 is an N6-acetyllysine; alternate (lysine 576). Lysine 576 is subject to N6-methyllysine; alternate. A Glycyl lysine isopeptide (Lys-Gly) (interchain with G-Cter in ubiquitin); alternate cross-link involves residue lysine 576. The residue at position 579 (serine 579) is a Phosphoserine. Lysine 584 participates in a covalent cross-link: Glycyl lysine isopeptide (Lys-Gly) (interchain with G-Cter in ubiquitin). Position 598 is an N6-acetyllysine; alternate (lysine 598). Residue lysine 598 forms a Glycyl lysine isopeptide (Lys-Gly) (interchain with G-Cter in ubiquitin); alternate linkage. Residues serine 602 and serine 606 each carry the phosphoserine modification. Lysine 607 is subject to N6-acetyllysine. At serine 610 the chain carries Phosphoserine. Position 615 is an N6-acetyllysine; alternate (lysine 615). Residue lysine 615 forms a Glycyl lysine isopeptide (Lys-Gly) (interchain with G-Cter in ubiquitin); alternate linkage. Serine 622 carries the phosphoserine modification. Position 628 is an N6,N6-dimethyllysine; alternate (lysine 628). Lysine 628, lysine 634, and lysine 638 each carry N6-acetyllysine; alternate. Residues lysine 628, lysine 634, and lysine 638 each participate in a glycyl lysine isopeptide (Lys-Gly) (interchain with G-Cter in ubiquitin); alternate cross-link. Serine 641 carries the post-translational modification Phosphoserine. 3 positions are modified to N6-acetyllysine; alternate: lysine 648, lysine 660, and lysine 664. Residues lysine 648, lysine 660, and lysine 664 each participate in a glycyl lysine isopeptide (Lys-Gly) (interchain with G-Cter in ubiquitin); alternate cross-link. At arginine 666 the chain carries Omega-N-methylarginine. A Phosphoserine modification is found at serine 669. Residue lysine 670 forms a Glycyl lysine isopeptide (Lys-Gly) (interchain with G-Cter in ubiquitin) linkage. Position 673 is a phosphoserine (serine 673). The residue at position 686 (lysine 686) is an N6-acetyllysine; alternate. Lysine 686 is covalently cross-linked (Glycyl lysine isopeptide (Lys-Gly) (interchain with G-Cter in ubiquitin); alternate). Lysine 692 is covalently cross-linked (Glycyl lysine isopeptide (Lys-Gly) (interchain with G-Cter in ubiquitin)). Lysine 702 is subject to N6-acetyllysine; alternate. Lysine 702 is covalently cross-linked (Glycyl lysine isopeptide (Lys-Gly) (interchain with G-Cter in ubiquitin); alternate). Tyrosine 711 carries the post-translational modification Phosphotyrosine. Phosphoserine occurs at positions 713 and 717. The segment at 715 to 734 is disordered; sequence VVSGDTSPRHLSNVSSTGSI. Polar residues predominate over residues 718 to 733; the sequence is GDTSPRHLSNVSSTGS. Threonine 720 carries the phosphothreonine modification. Serine 721, serine 726, serine 733, and serine 739 each carry phosphoserine. Threonine 744 bears the Phosphothreonine mark.

In terms of assembly, interacts with MARK1, MARK2, MARK3 and MARK4. Interacts with SQSTM1 when polyubiquitinated. Interacts with PSMC2 through SQSTM1. Interacts with FKBP4. Binds to CSNK1D. Interacts with SGK1. Interacts with EPM2A; the interaction dephosphorylates MAPT at Ser-396. Interacts with PIN1. Interacts with LRRK2. Interacts with LRP1, leading to endocytosis; this interaction is reduced in the presence of LRPAP1/RAP. Polyubiquitinated. Requires functional TRAF6 and may provoke SQSTM1-dependent degradation by the proteasome. Post-translationally, phosphorylation at various serine and threonine residues in S-P or T-P motifs by proline-directed protein kinases (PDPK1, CDK1, CDK5, GSK3, MAPK) (a few sites per protein in interphase, more in mitosis), and at serine residues in K-X-G-S motifs by MAP/microtubule affinity-regulating kinase (MARK1, MARK2, MARK3 or MARK4), causing detachment from microtubules, and their disassembly. Phosphorylation at Ser-579 by BRSK1 and BRSK2 in neurons affects ability to bind microtubules and plays a role in neuron polarization. Phosphorylated by PHK. Dephosphorylation at several serine and threonine residues by the serine/threonine phosphatase PPP5C. Phosphorylation at Ser-214 by SGK1 mediates microtubule depolymerization and neurite formation in hippocampal neurons.

It is found in the cytoplasm. The protein resides in the cytosol. It localises to the cell membrane. Its subcellular location is the cytoskeleton. The protein localises to the cell projection. It is found in the axon. The protein resides in the dendrite. Functionally, promotes microtubule assembly and stability, and might be involved in the establishment and maintenance of neuronal polarity. The C-terminus binds axonal microtubules while the N-terminus binds neural plasma membrane components, suggesting that tau functions as a linker protein between both. Axonal polarity is predetermined by tau localization (in the neuronal cell) in the domain of the cell body defined by the centrosome. The short isoforms allow plasticity of the cytoskeleton whereas the longer isoforms may preferentially play a role in its stabilization. The polypeptide is Microtubule-associated protein tau (MAPT) (Pongo pygmaeus (Bornean orangutan)).